We begin with the raw amino-acid sequence, 152 residues long: Transcriptional repressor NrdR (152 aa).

The segment at 3–34 (CPYCQHPDSDVIDTRKLHNGETIRRRRKCEAC) is a zinc-finger region. In terms of domain architecture, ATP-cone spans 49–139 (ITVVKKNGER…VYRSFADIGK (91 aa)).

The protein belongs to the NrdR family. Requires Zn(2+) as cofactor.

Its function is as follows. Negatively regulates transcription of bacterial ribonucleotide reductase nrd genes and operons by binding to NrdR-boxes. This chain is Transcriptional repressor NrdR, found in Roseiflexus sp. (strain RS-1).